A 477-amino-acid chain; its full sequence is Ribulose bisphosphate carboxylase large chain (477 aa).

A propeptide spanning residues 1–2 is cleaved from the precursor; it reads MS. P3 is subject to N-acetylproline. 2 residues coordinate substrate: N123 and T173. K175 (proton acceptor) is an active-site residue. K177 contacts substrate. The Mg(2+) site is built by K201, D203, and E204. The residue at position 201 (K201) is an N6-carboxylysine. The Proton acceptor role is filled by H294. Substrate is bound by residues R295, H327, and S379.

It belongs to the RuBisCO large chain family. Type I subfamily. As to quaternary structure, heterohexadecamer of 8 large chains and 8 small chains; disulfide-linked. The disulfide link is formed within the large subunit homodimers. It depends on Mg(2+) as a cofactor. In terms of processing, the disulfide bond which can form in the large chain dimeric partners within the hexadecamer appears to be associated with oxidative stress and protein turnover.

Its subcellular location is the plastid. It is found in the chloroplast. It carries out the reaction 2 (2R)-3-phosphoglycerate + 2 H(+) = D-ribulose 1,5-bisphosphate + CO2 + H2O. It catalyses the reaction D-ribulose 1,5-bisphosphate + O2 = 2-phosphoglycolate + (2R)-3-phosphoglycerate + 2 H(+). In terms of biological role, ruBisCO catalyzes two reactions: the carboxylation of D-ribulose 1,5-bisphosphate, the primary event in carbon dioxide fixation, as well as the oxidative fragmentation of the pentose substrate in the photorespiration process. Both reactions occur simultaneously and in competition at the same active site. The polypeptide is Ribulose bisphosphate carboxylase large chain (Avena sativa (Oat)).